The following is a 337-amino-acid chain: MLIKLPSASGSKESDVTPESIYLSRRTLLASSLAGLAVTALPRWASAADASRYADVEAGKAPGWFADKLPSTQWQAVTVKDEAITPFKDATHYNNFYEFGTDKGDPAKNAGSLKTEPWTVVIDGEVGKPGRYALEDFMKPYQLEERIYRLRCVEAWSMVIPWIGFPISALLKQVEPTSKAKYIRFETLEDAKSMPGQRSDFALIDWPYVEGLRLDEAMNPLAILAVGMYGRELPNQNGAPLRLVVPWKYGFKSVKSIVRISLVSEQPKTTWQSIAANEYGFYANVNPMVDHPRWTQARERRLPSGLFSPNLRETKMFNGYEEEVGSLYAGMNLRKDY.

Positions 1–50 (MLIKLPSASGSKESDVTPESIYLSRRTLLASSLAGLAVTALPRWASAADA) form a signal peptide, tat-type signal. Residues asparagine 94, 97-98 (YE), cysteine 152, threonine 187, asparagine 237, arginine 242, and 253-255 (SVK) each bind Mo-molybdopterin.

It belongs to the MsrP family. As to quaternary structure, heterodimer of a catalytic subunit (MsrP) and a heme-binding subunit (MsrQ). It depends on Mo-molybdopterin as a cofactor. Predicted to be exported by the Tat system. The position of the signal peptide cleavage has not been experimentally proven.

It localises to the periplasm. It catalyses the reaction L-methionyl-[protein] + a quinone + H2O = L-methionyl-(S)-S-oxide-[protein] + a quinol. The enzyme catalyses L-methionyl-[protein] + a quinone + H2O = L-methionyl-(R)-S-oxide-[protein] + a quinol. In terms of biological role, part of the MsrPQ system that repairs oxidized periplasmic proteins containing methionine sulfoxide residues (Met-O), using respiratory chain electrons. Thus protects these proteins from oxidative-stress damage caused by reactive species of oxygen and chlorine generated by the host defense mechanisms. MsrPQ is essential for the maintenance of envelope integrity under bleach stress, rescuing a wide series of structurally unrelated periplasmic proteins from methionine oxidation. The catalytic subunit MsrP is non-stereospecific, being able to reduce both (R-) and (S-) diastereoisomers of methionine sulfoxide. The protein is Protein-methionine-sulfoxide reductase catalytic subunit MsrP of Pseudomonas syringae pv. tomato (strain ATCC BAA-871 / DC3000).